The primary structure comprises 322 residues: Cytochrome c biogenesis protein CcsA (322 aa).

Helical transmembrane passes span 9–29 (ILTHICFSIILIVITIHLITL), 43–63 (GMIATFFCITGLLVSRWIYSG), 70–90 (LYESLIFLSWSFAIIHMVPKI), 142–162 (MLLSYAALLCGSLLSIALLVI), 226–246 (VISLGFTFLTIGILSGAVWAN), 259–274 (ETWAFITWTIFAIYSH), and 287–307 (AIVASMGFLIIWICYFGVNLL).

This sequence belongs to the CcmF/CycK/Ccl1/NrfE/CcsA family. May interact with Ccs1.

Its subcellular location is the plastid. It is found in the chloroplast thylakoid membrane. Required during biogenesis of c-type cytochromes (cytochrome c6 and cytochrome f) at the step of heme attachment. The protein is Cytochrome c biogenesis protein CcsA of Chloranthus spicatus (Chulantree).